A 401-amino-acid polypeptide reads, in one-letter code: Glutamyl-tRNA reductase (401 aa).

Residues Thr49–Arg52, Ser92, Glu97–Asp99, and Gln103 each bind substrate. Cys50 serves as the catalytic Nucleophile. Position 171–176 (Gly171–Ala176) interacts with NADP(+).

Belongs to the glutamyl-tRNA reductase family. As to quaternary structure, homodimer.

It carries out the reaction (S)-4-amino-5-oxopentanoate + tRNA(Glu) + NADP(+) = L-glutamyl-tRNA(Glu) + NADPH + H(+). The protein operates within porphyrin-containing compound metabolism; protoporphyrin-IX biosynthesis; 5-aminolevulinate from L-glutamyl-tRNA(Glu): step 1/2. In terms of biological role, catalyzes the NADPH-dependent reduction of glutamyl-tRNA(Glu) to glutamate 1-semialdehyde (GSA). This Picrophilus torridus (strain ATCC 700027 / DSM 9790 / JCM 10055 / NBRC 100828 / KAW 2/3) protein is Glutamyl-tRNA reductase.